We begin with the raw amino-acid sequence, 114 residues long: Large ribosomal subunit protein uL22 (114 aa).

Belongs to the universal ribosomal protein uL22 family. In terms of assembly, part of the 50S ribosomal subunit.

This protein binds specifically to 23S rRNA; its binding is stimulated by other ribosomal proteins, e.g. L4, L17, and L20. It is important during the early stages of 50S assembly. It makes multiple contacts with different domains of the 23S rRNA in the assembled 50S subunit and ribosome. In terms of biological role, the globular domain of the protein is located near the polypeptide exit tunnel on the outside of the subunit, while an extended beta-hairpin is found that lines the wall of the exit tunnel in the center of the 70S ribosome. The protein is Large ribosomal subunit protein uL22 of Streptococcus thermophilus (strain CNRZ 1066).